The chain runs to 760 residues: ER membrane protein complex subunit 1 (760 aa).

A signal peptide spans 1–24 (MKITCTDLVYVFILLFLNTSCVQA). Residues 25-723 (VFSDDAFITD…PSGQFDLMSP (699 aa)) are Lumenal-facing. N-linked (GlcNAc...) asparagine glycans are attached at residues Asn-73, Asn-106, Asn-192, Asn-202, Asn-420, Asn-443, Asn-574, and Asn-578. Residues 724–744 (TFEKGKLLITIFVLLVITYFI) form a helical membrane-spanning segment. At 745-760 (RPSVSNKKLKSQWLIK) the chain is on the cytoplasmic side.

This sequence belongs to the EMC1 family. Component of the ER membrane protein complex (EMC), which is composed of EMC1, EMC2, EMC3, EMC4, EMC5 and EMC6. Post-translationally, N-glycosylated.

Its subcellular location is the endoplasmic reticulum membrane. Its function is as follows. Part of the endoplasmic reticulum membrane protein complex (EMC) that enables the energy-independent insertion into endoplasmic reticulum membranes of newly synthesized membrane proteins. Preferentially accommodates proteins with transmembrane domains that are weakly hydrophobic or contain destabilizing features such as charged and aromatic residues. Involved in the cotranslational insertion of multi-pass membrane proteins in which stop-transfer membrane-anchor sequences become ER membrane spanning helices. It is also required for the post-translational insertion of tail-anchored/TA proteins in endoplasmic reticulum membranes. By mediating the proper cotranslational insertion of N-terminal transmembrane domains in an N-exo topology, with translocated N-terminus in the lumen of the ER, controls the topology of multi-pass membrane proteins. This chain is ER membrane protein complex subunit 1 (EMC1), found in Saccharomyces cerevisiae (strain ATCC 204508 / S288c) (Baker's yeast).